The following is a 105-amino-acid chain: Probable tetrachloroethene reductive dehalogenase membrane anchor protein (105 aa).

3 helical membrane-spanning segments follow: residues I3 to I23, I35 to G55, and A66 to Y86.

It belongs to the PceB family.

Its subcellular location is the cell membrane. May act as a membrane anchor for the tetrachloroethene reductive dehalogenase PceA. The sequence is that of Probable tetrachloroethene reductive dehalogenase membrane anchor protein from Desulfitobacterium hafniense (Desulfitobacterium frappieri).